We begin with the raw amino-acid sequence, 665 residues long: Coiled-coil domain-containing protein 138 (665 aa).

The residue at position 48 (Thr48) is a Phosphothreonine. At Ser49 the chain carries Phosphoserine. Residues 198–323 adopt a coiled-coil conformation; that stretch reads QQKFAEELQK…YEFMTIQRLK (126 aa). Position 469 is a phosphoserine (Ser469).

The sequence is that of Coiled-coil domain-containing protein 138 (CCDC138) from Macaca fascicularis (Crab-eating macaque).